We begin with the raw amino-acid sequence, 387 residues long: Transcription termination/antitermination protein NusA (387 aa).

The S1 motif domain occupies 145–209; the sequence is GQVLTGVVTR…AKGPSLLVSR (65 aa). One can recognise a KH domain in the interval 312-379; sequence AKKARVKVTK…ARERKAREEF (68 aa).

This sequence belongs to the NusA family. In terms of assembly, monomer. Binds directly to the core enzyme of the DNA-dependent RNA polymerase and to nascent RNA.

Its subcellular location is the cytoplasm. Functionally, participates in both transcription termination and antitermination. The polypeptide is Transcription termination/antitermination protein NusA (Thermus thermophilus (strain ATCC 27634 / DSM 579 / HB8)).